A 299-amino-acid polypeptide reads, in one-letter code: Lipoyl synthase (299 aa).

[4Fe-4S] cluster-binding residues include Cys34, Cys39, Cys45, Cys60, Cys64, Cys67, and Ser273. A Radical SAM core domain is found at 46 to 262 (WNKKHATVMI…KYVAYSKGFL (217 aa)).

The protein belongs to the radical SAM superfamily. Lipoyl synthase family. Requires [4Fe-4S] cluster as cofactor.

The protein resides in the cytoplasm. The enzyme catalyses [[Fe-S] cluster scaffold protein carrying a second [4Fe-4S](2+) cluster] + N(6)-octanoyl-L-lysyl-[protein] + 2 oxidized [2Fe-2S]-[ferredoxin] + 2 S-adenosyl-L-methionine + 4 H(+) = [[Fe-S] cluster scaffold protein] + N(6)-[(R)-dihydrolipoyl]-L-lysyl-[protein] + 4 Fe(3+) + 2 hydrogen sulfide + 2 5'-deoxyadenosine + 2 L-methionine + 2 reduced [2Fe-2S]-[ferredoxin]. The protein operates within protein modification; protein lipoylation via endogenous pathway; protein N(6)-(lipoyl)lysine from octanoyl-[acyl-carrier-protein]: step 2/2. Its function is as follows. Catalyzes the radical-mediated insertion of two sulfur atoms into the C-6 and C-8 positions of the octanoyl moiety bound to the lipoyl domains of lipoate-dependent enzymes, thereby converting the octanoylated domains into lipoylated derivatives. The protein is Lipoyl synthase of Ehrlichia canis (strain Jake).